Reading from the N-terminus, the 563-residue chain is Eukaryotic translation initiation factor 3 subunit D (563 aa).

A disordered region spans residues 95-136; it reads PGYMRNRNRFNQRGGYRRDNRGGRFQGQGGNMGMQNLSRGRD. An RNA gate region spans residues 294 to 308; the sequence is EFDLLTVGETANDLN. The disordered stretch occupies residues 528–563; that stretch reads IPNSTFETDEEDDDDDEDDVENDDGDDEKDEGDGED. Residues 534 to 563 show a composition bias toward acidic residues; that stretch reads ETDEEDDDDDEDDVENDDGDDEKDEGDGED.

This sequence belongs to the eIF-3 subunit D family. In terms of assembly, component of the eukaryotic translation initiation factor 3 (eIF-3) complex.

Its subcellular location is the cytoplasm. Functionally, mRNA cap-binding component of the eukaryotic translation initiation factor 3 (eIF-3) complex, which is involved in protein synthesis of a specialized repertoire of mRNAs and, together with other initiation factors, stimulates binding of mRNA and methionyl-tRNAi to the 40S ribosome. The eIF-3 complex specifically targets and initiates translation of a subset of mRNAs involved in cell proliferation. In the eIF-3 complex, eif3d specifically recognizes and binds the 7-methylguanosine cap of a subset of mRNAs. The sequence is that of Eukaryotic translation initiation factor 3 subunit D from Nematostella vectensis (Starlet sea anemone).